The chain runs to 699 residues: Endoplasmic reticulum mannosyl-oligosaccharide 1,2-alpha-mannosidase (699 aa).

Over 1-84 (MAACEGRRSG…WKQLSRLQRN (84 aa)) the chain is Cytoplasmic. The chain crosses the membrane as a helical; Signal-anchor for type II membrane protein span at residues 85–105 (MILFLLAFLLFCGLLFYINLA). Over 106 to 699 (DHWKALAFRL…AHPLPIWTPA (594 aa)) the chain is Lumenal. Positions 125-243 (IAGLKPANPP…LPPARTQGTP (119 aa)) are disordered. Over residues 176–201 (DLKDGTQEEATKRQEAPVDPRPEGDP) the composition is skewed to basic and acidic residues. E330 acts as the Proton donor in catalysis. D463 is a catalytic residue. A disulfide bridge links C527 with C556. E570 functions as the Proton donor in the catalytic mechanism. The active site involves E599. T688 is a Ca(2+) binding site.

The protein belongs to the glycosyl hydrolase 47 family. Ca(2+) serves as cofactor. In terms of tissue distribution, widely expressed.

It localises to the endoplasmic reticulum membrane. The enzyme catalyses N(4)-(alpha-D-Man-(1-&gt;2)-alpha-D-Man-(1-&gt;2)-alpha-D-Man-(1-&gt;3)-[alpha-D-Man-(1-&gt;2)-alpha-D-Man-(1-&gt;3)-[alpha-D-Man-(1-&gt;2)-alpha-D-Man-(1-&gt;6)]-alpha-D-Man-(1-&gt;6)]-beta-D-Man-(1-&gt;4)-beta-D-GlcNAc-(1-&gt;4)-beta-D-GlcNAc)-L-asparaginyl-[protein] (N-glucan mannose isomer 9A1,2,3B1,2,3) + 4 H2O = N(4)-(alpha-D-Man-(1-&gt;3)-[alpha-D-Man-(1-&gt;3)-[alpha-D-Man-(1-&gt;6)]-alpha-D-Man-(1-&gt;6)]-beta-D-Man-(1-&gt;4)-beta-D-GlcNAc-(1-&gt;4)-beta-D-GlcNAc)-L-asparaginyl-[protein] (N-glucan mannose isomer 5A1,2) + 4 beta-D-mannose. The catalysed reaction is N(4)-(alpha-D-Man-(1-&gt;2)-alpha-D-Man-(1-&gt;2)-alpha-D-Man-(1-&gt;3)-[alpha-D-Man-(1-&gt;3)-[alpha-D-Man-(1-&gt;2)-alpha-D-Man-(1-&gt;6)]-alpha-D-Man-(1-&gt;6)]-beta-D-Man-(1-&gt;4)-beta-D-GlcNAc-(1-&gt;4)-beta-D-GlcNAc)-L-asparaginyl-[protein] (N-glucan mannose isomer 8A1,2,3B1,3) + 3 H2O = N(4)-(alpha-D-Man-(1-&gt;3)-[alpha-D-Man-(1-&gt;3)-[alpha-D-Man-(1-&gt;6)]-alpha-D-Man-(1-&gt;6)]-beta-D-Man-(1-&gt;4)-beta-D-GlcNAc-(1-&gt;4)-beta-D-GlcNAc)-L-asparaginyl-[protein] (N-glucan mannose isomer 5A1,2) + 3 beta-D-mannose. It functions in the pathway protein modification; protein glycosylation. Its activity is regulated as follows. Inhibited by both 1-deoxymannojirimycin (dMNJ) and kifunensine. Involved in glycoprotein quality control targeting of misfolded glycoproteins for degradation. It primarily trims a single alpha-1,2-linked mannose residue from Man(9)GlcNAc(2) to produce Man(8)GlcNAc(2), but at high enzyme concentrations, as found in the ER quality control compartment (ERQC), it further trims the carbohydrates to Man(5-6)GlcNAc(2). This is Endoplasmic reticulum mannosyl-oligosaccharide 1,2-alpha-mannosidase (MAN1B1) from Homo sapiens (Human).